Consider the following 500-residue polypeptide: Glycerol kinase (500 aa).

Threonine 12 provides a ligand contact to ADP. ATP-binding residues include threonine 12, threonine 13, and serine 14. Threonine 12 serves as a coordination point for sn-glycerol 3-phosphate. Residue arginine 16 coordinates ADP. 4 residues coordinate sn-glycerol 3-phosphate: arginine 82, glutamate 83, tyrosine 134, and aspartate 244. Residues arginine 82, glutamate 83, tyrosine 134, aspartate 244, and glutamine 245 each coordinate glycerol. ADP contacts are provided by threonine 266 and glycine 309. The ATP site is built by threonine 266, glycine 309, glutamine 313, and glycine 410. Positions 410 and 414 each coordinate ADP.

This sequence belongs to the FGGY kinase family. As to quaternary structure, homotetramer and homodimer (in equilibrium).

It carries out the reaction glycerol + ATP = sn-glycerol 3-phosphate + ADP + H(+). It functions in the pathway polyol metabolism; glycerol degradation via glycerol kinase pathway; sn-glycerol 3-phosphate from glycerol: step 1/1. With respect to regulation, activated by phosphorylation and inhibited by fructose 1,6-bisphosphate (FBP). In terms of biological role, key enzyme in the regulation of glycerol uptake and metabolism. Catalyzes the phosphorylation of glycerol to yield sn-glycerol 3-phosphate. The chain is Glycerol kinase from Alkaliphilus metalliredigens (strain QYMF).